A 272-amino-acid polypeptide reads, in one-letter code: Indole-3-glycerol phosphate synthase (272 aa).

The protein belongs to the TrpC family.

It carries out the reaction 1-(2-carboxyphenylamino)-1-deoxy-D-ribulose 5-phosphate + H(+) = (1S,2R)-1-C-(indol-3-yl)glycerol 3-phosphate + CO2 + H2O. It participates in amino-acid biosynthesis; L-tryptophan biosynthesis; L-tryptophan from chorismate: step 4/5. The polypeptide is Indole-3-glycerol phosphate synthase (Mycolicibacterium vanbaalenii (strain DSM 7251 / JCM 13017 / BCRC 16820 / KCTC 9966 / NRRL B-24157 / PYR-1) (Mycobacterium vanbaalenii)).